We begin with the raw amino-acid sequence, 109 residues long: Somatostatin-2 (109 aa).

The N-terminal stretch at 1 to 16 (MQFLASLVSFLLVVWS) is a signal peptide. The propeptide occupies 17-80 (VKATALPVED…EPLENKLEER (64 aa)). C98 and C109 form a disulfide bridge.

It belongs to the somatostatin family.

It is found in the secreted. In terms of biological role, somatostatin inhibits the release of somatotropin. This chain is Somatostatin-2 (sst2), found in Protopterus annectens (African lungfish).